The sequence spans 171 residues: MARSLVESEALQMGVRRLSSPLTSPVQAEVYFPRLTVPFCGHIKGGLRPGKKILIMGIVNLEPKSFDIRLTCGDSEDPAADIAIELRAEFADKQFLRNACVSGKWGEEESAIPYFPFIADQPFRVEIHCEHPQFRIIVDGHQLFDFYHRVESLSAINTIKINGDLQLTKLG.

The Galectin domain occupies 38-170 (PFCGHIKGGL…INGDLQLTKL (133 aa)).

In terms of biological role, does not bind lactose, and may not bind carbohydrates. The protein is Galectin-related protein A (lgalsl-a) of Xenopus laevis (African clawed frog).